Reading from the N-terminus, the 1762-residue chain is Kinase D-interacting substrate of 220 kDa (1762 aa).

Over 1 to 508 (MSVLISQSVI…WLIVFLTLLL (508 aa)) the chain is Cytoplasmic. ANK repeat units follow at residues 45-74 (AAEQ…NWTA), 78-107 (ASKE…GWTA), 111-140 (ACYK…SVYP), 145-174 (AGRG…TTPL), 178-207 (ARKG…MTAL), 211-240 (VKGG…NTAL), 244-273 (SKEG…DTVL), 277-306 (VRGG…KTAL), 310-339 (VEKG…ETPL), 343-372 (TKMR…DTPL), and 376-405 (IRGR…KAGE). Residues 440–953 (YDLYSSALAD…NIVSVTGRLL (514 aa)) form the KAP NTPase domain. A helical transmembrane segment spans residues 509–529 (CGGLGLVFAFTVDTNLAIAIS). Topologically, residues 530 to 533 (LSFL) are extracellular. Residues 534 to 554 (ALIYIFFIVIYFGGRREGESW) form a helical membrane-spanning segment. Topologically, residues 555 to 668 (NWAWALSTRL…SFVIFLFIVG (114 aa)) are cytoplasmic. The helical transmembrane segment at 669-689 (CIIAGITLLAIFRVDPKHLTV) threads the bilayer. Over 690 to 696 (NAILISI) the chain is Extracellular. A helical transmembrane segment spans residues 697–717 (ASVVGLAFVLNCRTWWQVLDS). Residues 718 to 1680 (LLNSQRKRLH…TPSTVTLNNN (963 aa)) are Cytoplasmic-facing. A phosphoserine mark is found at S882 and S885. T914 is modified (phosphothreonine). S918 carries the phosphoserine; by PKD modification. The interval 1089–1092 (PRPP) is mediates interaction with CRKL. 7 positions are modified to phosphoserine: S1163, S1288, S1344, S1351, S1353, S1354, and S1357. Disordered regions lie at residues 1279-1305 (DPRF…HTEL), 1336-1358 (RHSN…LNSQ), 1390-1440 (EGGT…DGRK), and 1452-1556 (YSSS…EPIR). Over residues 1338-1350 (SNLSWQSQTRRTP) the composition is skewed to polar residues. Residues 1395–1422 (SSTISGRSSPHSTYYIGQSSSGGSIHST) show a composition bias toward low complexity. Basic and acidic residues predominate over residues 1423–1440 (LEQERGKEGELKQEDGRK). Polar residues predominate over residues 1452 to 1462 (YSSSGVSTNEA). Phosphoserine occurs at positions 1513, 1518, 1547, and 1566. Over residues 1514 to 1524 (DEDESGTEESD) the composition is skewed to acidic residues. Positions 1529 to 1553 (LKDDKDKKAEGKAERVCKSPEHSAE) are enriched in basic and acidic residues. The tract at residues 1571 to 1628 (DKKDSSDSGVRSNESSPNHSLHNEAADDSQLEKANLIELEDEGHSGKRGMPHSLSGLQ) is disordered. The segment covering 1579 to 1590 (GVRSNESSPNHS) has biased composition (polar residues). A phosphoserine mark is found at S1615 and S1625. The residue at position 1671 (T1671) is a Phosphothreonine. S1673 bears the Phosphoserine mark. Residue T1676 is modified to Phosphothreonine. The segment at 1704-1762 (ILRPGPSPNPTAVQNENLKSMAHKRSQRSSYTRLSKDASELHAASSESTGFGEERESIL) is disordered. The short motif at 1757–1762 (ERESIL) is the PDZ-binding element.

Found in a complex, at least composed of KIDINS220, MAGI2, NTRK1 and RAPGEF2; the complex is mainly formed at late endosomes in a nerve growth factor (NGF)-dependent manner. Interacts with RAPGEF2; the interaction is strengthened after NGF stimulation. Isoform 2 interacts (via C-terminal domain) with MAGI2 isoform 1 (via PDZ domain). Interacts with NTRK1, NTRK2, NTRK3, ERKL and NGFR. Can form a ternary complex with NGFR and NTRK1 and this complex is affected by the expression levels of KIDINS220/ARMS. An increase in KIDINS220/ARMS expression leads to a decreased association of NGFR and NTRK1. Interacts (via PDZ-binding motif) with SNTA1 and SNTB2 (via PDZ domains). Interacts with EPHA4 and PRKD1. In terms of processing, tyrosine phosphorylated by NTRK1, NTRK2, EPHB2 and EPHA4. Phosphorylation at Ser-918 is induced by phorbol ester treatment. Phosphorylation by NTRK2 is induced by brain-derived neurotrophic factor (BDNF) and neurotrophin-4/5. Phosphorylation by NTRK1 is induced by nerve growth factor (NGF). Expressed in developing nervous system and in highly plastic areas of the adult brain. Also expressed in neuroendocrine cells, where it concentrates at the tip of neurites. Expressed in developing muscle and is concentrated at the neuromuscular junction (NMS). SNTA1 can regulate its localization in the NMS.

It is found in the membrane. The protein localises to the late endosome. In terms of biological role, promotes a prolonged MAP-kinase signaling by neurotrophins through activation of a Rap1-dependent mechanism. Provides a docking site for the CRKL-C3G complex, resulting in Rap1-dependent sustained ERK activation. May play an important role in regulating postsynaptic signal transduction through the syntrophin-mediated localization of receptor tyrosine kinases such as EPHA4. In cooperation with SNTA1 can enhance EPHA4-induced JAK/STAT activation. Plays a role in nerve growth factor (NGF)-induced recruitment of RAPGEF2 to late endosomes and neurite outgrowth. May play a role in neurotrophin- and ephrin-mediated neuronal outgrowth and in axon guidance during neural development and in neuronal regeneration. The protein is Kinase D-interacting substrate of 220 kDa (Kidins220) of Rattus norvegicus (Rat).